Here is a 299-residue protein sequence, read N- to C-terminus: tRNA dimethylallyltransferase (299 aa).

Position 13-20 (13-20) interacts with ATP; it reads GATASGKT. 15-20 provides a ligand contact to substrate; that stretch reads TASGKT. Positions 38 to 41 are interaction with substrate tRNA; that stretch reads DSRQ.

The protein belongs to the IPP transferase family. Monomer. It depends on Mg(2+) as a cofactor.

It carries out the reaction adenosine(37) in tRNA + dimethylallyl diphosphate = N(6)-dimethylallyladenosine(37) in tRNA + diphosphate. In terms of biological role, catalyzes the transfer of a dimethylallyl group onto the adenine at position 37 in tRNAs that read codons beginning with uridine, leading to the formation of N6-(dimethylallyl)adenosine (i(6)A). The polypeptide is tRNA dimethylallyltransferase (Prochlorococcus marinus (strain MIT 9312)).